The primary structure comprises 357 residues: Aminomethyltransferase (357 aa).

It belongs to the GcvT family. The glycine cleavage system is composed of four proteins: P, T, L and H.

It catalyses the reaction N(6)-[(R)-S(8)-aminomethyldihydrolipoyl]-L-lysyl-[protein] + (6S)-5,6,7,8-tetrahydrofolate = N(6)-[(R)-dihydrolipoyl]-L-lysyl-[protein] + (6R)-5,10-methylene-5,6,7,8-tetrahydrofolate + NH4(+). The glycine cleavage system catalyzes the degradation of glycine. This is Aminomethyltransferase from Deinococcus deserti (strain DSM 17065 / CIP 109153 / LMG 22923 / VCD115).